The primary structure comprises 146 residues: Hemoglobin subunit beta (146 aa).

Val-1 bears the N-acetylvaline mark. The region spanning 2-146 (HLSDGEKNAI…VANALAHKYH (145 aa)) is the Globin domain. Ser-44 is modified (phosphoserine). Lys-59 is subject to N6-acetyllysine. His-63 lines the heme b pocket. Lys-82 bears the N6-acetyllysine mark. His-92 contacts heme b. Cys-93 is modified (S-nitrosocysteine). Lys-144 bears the N6-acetyllysine mark.

This sequence belongs to the globin family. Heterotetramer of two alpha chains and two beta chains. As to expression, red blood cells.

Its function is as follows. Involved in oxygen transport from the lung to the various peripheral tissues. The sequence is that of Hemoglobin subunit beta (HBB) from Spermophilus citellus (European ground squirrel).